Reading from the N-terminus, the 131-residue chain is ATP synthase epsilon chain, chloroplastic (131 aa).

This sequence belongs to the ATPase epsilon chain family. As to quaternary structure, F-type ATPases have 2 components, CF(1) - the catalytic core - and CF(0) - the membrane proton channel. CF(1) has five subunits: alpha(3), beta(3), gamma(1), delta(1), epsilon(1). CF(0) has three main subunits: a, b and c.

The protein localises to the plastid. Its subcellular location is the chloroplast thylakoid membrane. In terms of biological role, produces ATP from ADP in the presence of a proton gradient across the membrane. This is ATP synthase epsilon chain, chloroplastic from Oltmannsiellopsis viridis (Marine flagellate).